The following is a 683-amino-acid chain: Stromal interaction molecule 1 (683 aa).

The first 22 residues, 1–22 (MDVCARLALWLLWGLLLHHGQS), serve as a signal peptide directing secretion. Residues 23-211 (LSQSHSEKAT…LLTRHNHLKD (189 aa)) lie on the Extracellular side of the membrane. EF-hand domains lie at 62–95 (SFDA…EDLN) and 100–124 (TVKH…AWKS). Ca(2+)-binding residues include Asp74, Asp76, Asn78, Asp80, and Glu85. Asn129 and Asn169 each carry an N-linked (GlcNAc...) asparagine glycan. The region spanning 130–198 (WTVDEVVQWL…QLKALDTVLF (69 aa)) is the SAM domain. Residues 212–232 (FMLVVSIVIGVGGCWFAYIQN) traverse the membrane as a helical segment. Topologically, residues 233–683 (RYSKEHMKKM…LKIFKKPLKK (451 aa)) are cytoplasmic. Residues 246 to 440 (LEGLHRAEQS…IEILCGFQIV (195 aa)) are a coiled coil. Ser255 is modified (phosphoserine). An SOAR/CAD region spans residues 342–440 (PEALQKWLQL…IEILCGFQIV (99 aa)). A contributes to fast Ca(2+)-dependent inactivation of CRAC channels region spans residues 473-481 (DDVDDMDEE). Over residues 488-497 (MQSPSLQSSV) the composition is skewed to low complexity. The disordered stretch occupies residues 488–535 (MQSPSLQSSVRQRLTEPQHGLGSQRDLTHSDSESSLHMSDRQRLAPKP). A Phosphothreonine modification is found at Thr502. Ser510 is modified (phosphoserine). Residues 513–530 (DLTHSDSESSLHMSDRQR) are compositionally biased toward basic and acidic residues. Thr515 carries the phosphothreonine modification. Residues Ser517, Ser519, Ser521, Ser522, Ser565, Ser573, Ser606, Ser616, and Ser626 each carry the phosphoserine modification. The segment at 597 to 683 (LSSPALPSGS…LKIFKKPLKK (87 aa)) is disordered. Residues 640 to 643 (TRIP) carry the Microtubule tip localization signal motif. Residues 653-664 (EEDNGSIGEETD) are compositionally biased toward acidic residues. Ser658 is modified (phosphoserine). Thr663 is modified (phosphothreonine). Ser666 bears the Phosphoserine mark. Residues 668–683 (GRKKFPLKIFKKPLKK) show a composition bias toward basic residues. Residues 670–683 (KKFPLKIFKKPLKK) form a required for generation of inwardly rectifying CRAC currents region.

In terms of assembly, monomer in the presence of Ca(2+). It oligomerizes in absence of Ca(2+). Forms homooligomers and heterooligomers with STIM2. Interacts with pore-forming subunits of CRAC channels, ORAI1, ORAI2 and ORAI3; this interaction is potentiated upon Ca(2+) store depletion. Interacts (via the transmembrane region and the SOAR/CAD domain) with SPPL3; the interaction promotes the binding of STIM1 to ORAI1. Interacts with ORAI1. Interacts with MAPRE1; probably required for targeting to the growing microtubule plus ends. Interacts with CRACR2A/EFCAB4B; the interaction is direct and takes place in absence of Ca(2+). Forms a complex with CRACR2A/EFCAB4B and ORAI1 at low concentration of Ca(2+), the complex dissociates at elevated Ca(2+) concentrations. Interacts with SARAF, promoting a slow inactivation of STIM1-dependent SOCE activity, possibly by facilitating the deoligomerization of STIM1. Interacts with EFHB; the interaction takes place upon Ca(2+)-store depletion and inhibits the association with SARAF. Interacts with ASPH. Interacts with SLC35G1; intracellular Ca(2+)-dependent. May interact with ATP1A1, ATP2A2, ATP2B1, ATP2B4, KPNB1 and XPO1; through SLC35G1. Interacts with TMEM203. Interacts with STIMATE, promoting STIM1 conformational switch. Interacts with TMEM178A. Interacts with CASQ1 (via C-terminal end and preferentially with the monomeric form); this interaction increases in response to a depletion of intracellular calcium, decreases both STIM1 aggregation and clustering, interaction of STIM1 with ORAI1 and store-operated Ca(2+) entry (SOCE) activity. Post-translationally, glycosylation is required for cell surface expression. In terms of processing, phosphorylated predominantly on Ser residues.

Its subcellular location is the cell membrane. The protein localises to the endoplasmic reticulum membrane. It is found in the sarcoplasmic reticulum. The protein resides in the cytoplasm. It localises to the cytoskeleton. Functionally, acts as a Ca(2+) sensor that gates two major inward rectifying Ca(2+) channels at the plasma membrane: Ca(2+) release-activated Ca(2+) (CRAC) channels and arachidonate-regulated Ca(2+)-selective (ARC) channels. Plays a role in mediating store-operated Ca(2+) entry (SOCE), a Ca(2+) influx following depletion of intracellular Ca(2+) stores. Upon Ca(2+) depletion, translocates from the endoplasmic reticulum to the plasma membrane where it activates CRAC channel pore-forming subunits ORA1, ORA2 and ORAI3 to generate sustained and oscillatory Ca(2+) entry. Involved in enamel formation. The sequence is that of Stromal interaction molecule 1 (STIM1) from Bos taurus (Bovine).